Here is an 83-residue protein sequence, read N- to C-terminus: Large ribosomal subunit protein uL23 (83 aa).

It belongs to the universal ribosomal protein uL23 family. As to quaternary structure, part of the 50S ribosomal subunit. Contacts protein L29.

In terms of biological role, binds to 23S rRNA. One of the proteins that surrounds the polypeptide exit tunnel on the outside of the ribosome. The chain is Large ribosomal subunit protein uL23 from Thermoplasma volcanium (strain ATCC 51530 / DSM 4299 / JCM 9571 / NBRC 15438 / GSS1).